The primary structure comprises 151 residues: UPF0756 membrane protein Dred_1676 (151 aa).

The next 4 helical transmembrane spans lie at 9–29 (VILL…CASV), 47–67 (THGL…PIAT), 75–95 (LLYN…ILAT), and 111–131 (IIFG…GQPV).

The protein belongs to the UPF0756 family.

The protein localises to the cell membrane. This is UPF0756 membrane protein Dred_1676 from Desulforamulus reducens (strain ATCC BAA-1160 / DSM 100696 / MI-1) (Desulfotomaculum reducens).